A 120-amino-acid polypeptide reads, in one-letter code: NAD(P)H-quinone oxidoreductase subunit 3 (120 aa).

3 helical membrane-spanning segments follow: residues 11–31 (LIFL…SYLI), 64–84 (MFAL…PWAV), and 89–109 (LGLL…VALV).

The protein belongs to the complex I subunit 3 family. In terms of assembly, NDH-1 can be composed of about 15 different subunits; different subcomplexes with different compositions have been identified which probably have different functions.

It localises to the cell inner membrane. It catalyses the reaction a plastoquinone + NADH + (n+1) H(+)(in) = a plastoquinol + NAD(+) + n H(+)(out). It carries out the reaction a plastoquinone + NADPH + (n+1) H(+)(in) = a plastoquinol + NADP(+) + n H(+)(out). Its function is as follows. NDH-1 shuttles electrons from an unknown electron donor, via FMN and iron-sulfur (Fe-S) centers, to quinones in the respiratory and/or the photosynthetic chain. The immediate electron acceptor for the enzyme in this species is believed to be plastoquinone. Couples the redox reaction to proton translocation, and thus conserves the redox energy in a proton gradient. Cyanobacterial NDH-1 also plays a role in inorganic carbon-concentration. The protein is NAD(P)H-quinone oxidoreductase subunit 3 of Gloeobacter violaceus (strain ATCC 29082 / PCC 7421).